A 326-amino-acid polypeptide reads, in one-letter code: tRNA N6-adenosine threonylcarbamoyltransferase (326 aa).

2 residues coordinate Fe cation: His113 and His117. Residues 134 to 138 (VASGG), Asp167, Gly180, and Asn267 contribute to the substrate site. A Fe cation-binding site is contributed by Asp291.

Belongs to the KAE1 / TsaD family. The cofactor is Fe(2+).

The protein resides in the cytoplasm. The enzyme catalyses L-threonylcarbamoyladenylate + adenosine(37) in tRNA = N(6)-L-threonylcarbamoyladenosine(37) in tRNA + AMP + H(+). In terms of biological role, required for the formation of a threonylcarbamoyl group on adenosine at position 37 (t(6)A37) in tRNAs that read codons beginning with adenine. Is involved in the transfer of the threonylcarbamoyl moiety of threonylcarbamoyl-AMP (TC-AMP) to the N6 group of A37, together with TsaE and TsaB. TsaD likely plays a direct catalytic role in this reaction. The chain is tRNA N6-adenosine threonylcarbamoyltransferase from Thermus thermophilus (strain ATCC 27634 / DSM 579 / HB8).